We begin with the raw amino-acid sequence, 129 residues long: Small ribosomal subunit protein uS11 (129 aa).

It belongs to the universal ribosomal protein uS11 family. Part of the 30S ribosomal subunit. Interacts with proteins S7 and S18. Binds to IF-3.

Its function is as follows. Located on the platform of the 30S subunit, it bridges several disparate RNA helices of the 16S rRNA. Forms part of the Shine-Dalgarno cleft in the 70S ribosome. In Allorhizobium ampelinum (strain ATCC BAA-846 / DSM 112012 / S4) (Agrobacterium vitis (strain S4)), this protein is Small ribosomal subunit protein uS11.